An 825-amino-acid polypeptide reads, in one-letter code: Endochitinase A1 (825 aa).

Residues 1–22 (MVSSKLSFVATAVAALAPLASA) form the signal peptide. One can recognise a GH18 domain in the interval 29-338 (SNLAIYWGQG…DHMKDILLHC (310 aa)). The Proton donor role is filled by Glu174. Disordered stretches follow at residues 338 to 568 (CDPS…TTTA), 680 to 736 (PVTE…VSTS), and 750 to 792 (PLIL…YTQE). Positions 344–554 (VTSSSAVPSS…STDESSTTVG (211 aa)) are enriched in low complexity. Asn559 carries an N-linked (GlcNAc...) asparagine glycan. A compositionally biased stretch (polar residues) spans 701–712 (EGSNPTQPSGAS). N-linked (GlcNAc...) asparagine glycosylation is present at Asn717. Polar residues predominate over residues 772–792 (PSGQNSGSSSHVPIPPSYTQE). Residue Gly800 is the site of GPI-anchor amidated glycine attachment. Residues 801-825 (AASRVTGLGHGLVLTVLTLSAFFVL) constitute a propeptide, removed in mature form.

It belongs to the glycosyl hydrolase 18 family. Chitinase class III subfamily. O-mannosylated by pmt4.

It is found in the cell membrane. Its subcellular location is the secreted. The protein resides in the cell wall. The catalysed reaction is Random endo-hydrolysis of N-acetyl-beta-D-glucosaminide (1-&gt;4)-beta-linkages in chitin and chitodextrins.. With respect to regulation, the cyclic peptide natural product argifin acts as a specific inhibitor. Functionally, GPI-anchored chitinase involved in the degradation of chitin, a component of the cell walls of fungi and exoskeletal elements of some animals (including worms and arthropods). Required to reshape the cell wall at the sites where cell wall remodeling and/or cell wall maturation actively take place such as sites of conidia formation. This is Endochitinase A1 (chiA1) from Aspergillus fumigatus (Neosartorya fumigata).